Consider the following 395-residue polypeptide: Phosphoglycerate kinase (395 aa).

Residues 21–23 (DFN), R36, 59–62 (HLGR), R120, and R153 contribute to the substrate site. ATP is bound by residues K203, E325, and 351–354 (GGDS).

This sequence belongs to the phosphoglycerate kinase family. In terms of assembly, monomer.

The protein resides in the cytoplasm. The enzyme catalyses (2R)-3-phosphoglycerate + ATP = (2R)-3-phospho-glyceroyl phosphate + ADP. It participates in carbohydrate degradation; glycolysis; pyruvate from D-glyceraldehyde 3-phosphate: step 2/5. The protein is Phosphoglycerate kinase of Roseiflexus castenholzii (strain DSM 13941 / HLO8).